Reading from the N-terminus, the 466-residue chain is UDP-N-acetylmuramoylalanine--D-glutamate ligase (466 aa).

Residue 115 to 121 (GTDGKTT) coordinates ATP.

Belongs to the MurCDEF family.

The protein localises to the cytoplasm. It catalyses the reaction UDP-N-acetyl-alpha-D-muramoyl-L-alanine + D-glutamate + ATP = UDP-N-acetyl-alpha-D-muramoyl-L-alanyl-D-glutamate + ADP + phosphate + H(+). Its pathway is cell wall biogenesis; peptidoglycan biosynthesis. Functionally, cell wall formation. Catalyzes the addition of glutamate to the nucleotide precursor UDP-N-acetylmuramoyl-L-alanine (UMA). The sequence is that of UDP-N-acetylmuramoylalanine--D-glutamate ligase from Chlorobium phaeobacteroides (strain BS1).